The chain runs to 237 residues: Phosphoribosylaminoimidazole-succinocarboxamide synthase (237 aa).

It belongs to the SAICAR synthetase family.

It catalyses the reaction 5-amino-1-(5-phospho-D-ribosyl)imidazole-4-carboxylate + L-aspartate + ATP = (2S)-2-[5-amino-1-(5-phospho-beta-D-ribosyl)imidazole-4-carboxamido]succinate + ADP + phosphate + 2 H(+). The protein operates within purine metabolism; IMP biosynthesis via de novo pathway; 5-amino-1-(5-phospho-D-ribosyl)imidazole-4-carboxamide from 5-amino-1-(5-phospho-D-ribosyl)imidazole-4-carboxylate: step 1/2. This chain is Phosphoribosylaminoimidazole-succinocarboxamide synthase, found in Pseudomonas fluorescens (strain SBW25).